The chain runs to 288 residues: Homoserine kinase (288 aa).

79-89 contributes to the ATP binding site; that stretch reads PPARGLGSSSA.

The protein belongs to the GHMP kinase family. Homoserine kinase subfamily.

It localises to the cytoplasm. It carries out the reaction L-homoserine + ATP = O-phospho-L-homoserine + ADP + H(+). It participates in amino-acid biosynthesis; L-threonine biosynthesis; L-threonine from L-aspartate: step 4/5. Catalyzes the ATP-dependent phosphorylation of L-homoserine to L-homoserine phosphate. The sequence is that of Homoserine kinase from Listeria innocua serovar 6a (strain ATCC BAA-680 / CLIP 11262).